Here is a 125-residue protein sequence, read N- to C-terminus: Small ribosomal subunit protein uS13 (125 aa).

Residues 93 to 125 (RAGLPVRGQRTRTNARTRRGARKTVAGKKKATR) are disordered. The span at 101 to 125 (QRTRTNARTRRGARKTVAGKKKATR) shows a compositional bias: basic residues.

This sequence belongs to the universal ribosomal protein uS13 family. In terms of assembly, part of the 30S ribosomal subunit. Forms a loose heterodimer with protein S19. Forms two bridges to the 50S subunit in the 70S ribosome.

Functionally, located at the top of the head of the 30S subunit, it contacts several helices of the 16S rRNA. In the 70S ribosome it contacts the 23S rRNA (bridge B1a) and protein L5 of the 50S subunit (bridge B1b), connecting the 2 subunits; these bridges are implicated in subunit movement. Contacts the tRNAs in the A and P-sites. In Synechococcus elongatus (strain ATCC 33912 / PCC 7942 / FACHB-805) (Anacystis nidulans R2), this protein is Small ribosomal subunit protein uS13.